A 56-amino-acid polypeptide reads, in one-letter code: Preprotein translocase subunit SecG (56 aa).

At 1-29 (MAKEKATLPPTGAGLMRFFDEDTKAVKIS) the chain is on the cytoplasmic side. The chain crosses the membrane as a helical span at residues 30-51 (PRGVIALTLILVALEILLHAFG). Residues 52 to 56 (PQIFG) lie on the Extracellular side of the membrane.

Belongs to the SEC61-beta family. As to quaternary structure, component of the protein translocase complex. Heterotrimer consisting of alpha (SecY), beta (SecG) and gamma (SecE) subunits. Can form oligomers of the heterotrimer.

The protein localises to the cell membrane. Functionally, involved in protein export. The function of the beta subunit is unknown, but it may be involved in stabilization of the trimeric complex. This Thermococcus onnurineus (strain NA1) protein is Preprotein translocase subunit SecG.